The chain runs to 573 residues: Arylsulfatase I (573 aa).

Residues 1 to 23 (MHALSGFSLVSLLSLGYLSWDWA) form the signal peptide. Positions 55, 56, and 93 each coordinate Ca(2+). Cys93 functions as the Nucleophile in the catalytic mechanism. Residue Cys93 is modified to 3-oxoalanine (Cys). Lys147 is a substrate binding site. His149 is a catalytic residue. His239 is a binding site for substrate. N-linked (GlcNAc...) asparagine glycans are attached at residues Asn276 and Asn288. Ca(2+) is bound by residues Asp297 and Asn298. A substrate-binding site is contributed by Lys315. N-linked (GlcNAc...) asparagine glycans are attached at residues Asn466 and Asn496. The segment at 506-550 (AANPRAHPDFNGGAWGPWASDEDEEEEDEEEEGRARSFPRGRRKK) is disordered. Residues 525 to 537 (SDEDEEEEDEEEE) show a composition bias toward acidic residues.

Belongs to the sulfatase family. Ca(2+) is required as a cofactor. The oxidation of Cys-93 residue to 3-oxoalanine (also known as C(alpha)-formylglycine) by SUMF1/Sulfatase-modifying factor 1, seems critical for catalytic activity.

The protein resides in the secreted. It localises to the endoplasmic reticulum. In terms of biological role, displays arylsulfatase activity at neutral pH, when co-expressed with SUMF1; arylsulfatase activity is measured in the secretion medium of retinal cell line, but no activity is recorded when measured in cell extracts. In Rattus norvegicus (Rat), this protein is Arylsulfatase I (Arsi).